The following is a 161-amino-acid chain: Cyclic pyranopterin monophosphate synthase (161 aa).

Residues 75–77 (MCH) and 115–116 (ME) contribute to the substrate site. Asp-130 is an active-site residue.

This sequence belongs to the MoaC family. As to quaternary structure, homohexamer; trimer of dimers.

The catalysed reaction is (8S)-3',8-cyclo-7,8-dihydroguanosine 5'-triphosphate = cyclic pyranopterin phosphate + diphosphate. It functions in the pathway cofactor biosynthesis; molybdopterin biosynthesis. Its function is as follows. Catalyzes the conversion of (8S)-3',8-cyclo-7,8-dihydroguanosine 5'-triphosphate to cyclic pyranopterin monophosphate (cPMP). The chain is Cyclic pyranopterin monophosphate synthase from Bacillus thuringiensis subsp. konkukian (strain 97-27).